The following is a 413-amino-acid chain: Divalent metal cation transporter MntH (413 aa).

Residues 1–19 (MTDNRVENSSGRAARKLRL) lie on the Cytoplasmic side of the membrane. Residues 20–39 (ALMGPAFIAAIGYIDPGNFA) form a helical membrane-spanning segment. Residues 40 to 51 (TNIQAGASFGYQ) are Periplasmic-facing. The chain crosses the membrane as a helical span at residues 52–71 (LLWVVVWANLMAMLIQILSA). Residues 72–95 (KLGIATGKNLAEQIRDHYPRPVVW) lie on the Cytoplasmic side of the membrane. The chain crosses the membrane as a helical span at residues 96–118 (FYWVQAEIIAMATDLAEFIGAAI). Residues 119 to 125 (GFKLILG) lie on the Periplasmic side of the membrane. A helical membrane pass occupies residues 126–145 (VSLLQGAVLTGIATFLILML). Topologically, residues 146 to 155 (QRRGQKPLEK) are cytoplasmic. Residues 156-175 (VIGGLLLFVAAAYIVELFFS) form a helical membrane-spanning segment. The Periplasmic segment spans residues 176 to 196 (QPDMAQLGKGMVIPALPNPEA). A helical membrane pass occupies residues 197–220 (VFLAAGVLGATIMPHVIYLHSSLT). The Cytoplasmic portion of the chain corresponds to 221 to 238 (QHLHGGTRQQRYSATKWD). Residues 239–258 (VAIAMTIAGFVNLAMMATAA) form a helical membrane-spanning segment. Topologically, residues 259 to 276 (AAFHFSGHTGIADLDQAY) are periplasmic. A helical membrane pass occupies residues 277–297 (LTLEPLLSHAAATVFGLSLVA). The Cytoplasmic segment spans residues 298–327 (AGLSSTVVGTLAGQVVMQGFVRFHIPLWVR). A helical membrane pass occupies residues 328-344 (RTITMLPSFIVILMGLD). Over 345–350 (PTRILV) the chain is Periplasmic. The chain crosses the membrane as a helical span at residues 351–370 (MSQVLLSFGIALALVPLLIF). Residues 371 to 387 (TSNATLMGELVNTRRVK) are Cytoplasmic-facing. The chain crosses the membrane as a helical span at residues 388–406 (QIGWIIVVLVVALNIWLLV). The Periplasmic portion of the chain corresponds to 407 to 413 (GTVMGLS).

It belongs to the NRAMP family.

The protein localises to the cell inner membrane. H(+)-stimulated, divalent metal cation uptake system. This Salmonella schwarzengrund (strain CVM19633) protein is Divalent metal cation transporter MntH.